We begin with the raw amino-acid sequence, 393 residues long: Formate-dependent phosphoribosylglycinamide formyltransferase (393 aa).

N(1)-(5-phospho-beta-D-ribosyl)glycinamide is bound by residues 22-23 (EL) and glutamate 82. ATP is bound by residues arginine 114, lysine 155, 160-165 (SSGHGQ), 195-198 (EGFV), and glutamate 203. An ATP-grasp domain is found at 119 to 308 (RLAAEELGLP…EFALHARAIL (190 aa)). The Mg(2+) site is built by glutamate 267 and glutamate 279. N(1)-(5-phospho-beta-D-ribosyl)glycinamide-binding positions include aspartate 286, lysine 356, and 363-364 (RR).

Belongs to the PurK/PurT family. Homodimer.

The catalysed reaction is N(1)-(5-phospho-beta-D-ribosyl)glycinamide + formate + ATP = N(2)-formyl-N(1)-(5-phospho-beta-D-ribosyl)glycinamide + ADP + phosphate + H(+). Its pathway is purine metabolism; IMP biosynthesis via de novo pathway; N(2)-formyl-N(1)-(5-phospho-D-ribosyl)glycinamide from N(1)-(5-phospho-D-ribosyl)glycinamide (formate route): step 1/1. Its function is as follows. Involved in the de novo purine biosynthesis. Catalyzes the transfer of formate to 5-phospho-ribosyl-glycinamide (GAR), producing 5-phospho-ribosyl-N-formylglycinamide (FGAR). Formate is provided by PurU via hydrolysis of 10-formyl-tetrahydrofolate. The chain is Formate-dependent phosphoribosylglycinamide formyltransferase from Pasteurella multocida (strain Pm70).